The chain runs to 685 residues: Threonine--tRNA ligase (685 aa).

Positions 1-65 (MSTPASAAPA…DTDVEVEPVA (65 aa)) constitute a TGS domain. Residues 262 to 568 (DHRKLGSELD…LTEHYAGAFP (307 aa)) are catalytic. Zn(2+)-binding residues include cysteine 367, histidine 418, and histidine 545.

This sequence belongs to the class-II aminoacyl-tRNA synthetase family. As to quaternary structure, homodimer. Zn(2+) serves as cofactor.

It is found in the cytoplasm. The catalysed reaction is tRNA(Thr) + L-threonine + ATP = L-threonyl-tRNA(Thr) + AMP + diphosphate + H(+). Its function is as follows. Catalyzes the attachment of threonine to tRNA(Thr) in a two-step reaction: L-threonine is first activated by ATP to form Thr-AMP and then transferred to the acceptor end of tRNA(Thr). Also edits incorrectly charged L-seryl-tRNA(Thr). The protein is Threonine--tRNA ligase of Rhodococcus jostii (strain RHA1).